A 410-amino-acid chain; its full sequence is Elongation factor Tu (410 aa).

Positions 10 to 214 (KPHVNIGTIG…EVDAYIPTPE (205 aa)) constitute a tr-type G domain. A G1 region spans residues 19–26 (GHVDHGKT). 19-26 (GHVDHGKT) serves as a coordination point for GTP. Threonine 26 is a binding site for Mg(2+). A G2 region spans residues 60–64 (GITIN). The tract at residues 81–84 (DCPG) is G3. GTP-binding positions include 81–85 (DCPGH) and 136–139 (NKAD). Residues 136 to 139 (NKAD) form a G4 region. The tract at residues 174-176 (SAL) is G5.

It belongs to the TRAFAC class translation factor GTPase superfamily. Classic translation factor GTPase family. EF-Tu/EF-1A subfamily. As to quaternary structure, monomer.

It localises to the cytoplasm. The catalysed reaction is GTP + H2O = GDP + phosphate + H(+). Functionally, GTP hydrolase that promotes the GTP-dependent binding of aminoacyl-tRNA to the A-site of ribosomes during protein biosynthesis. The protein is Elongation factor Tu of Arthrospira platensis (Spirulina platensis).